Here is a 122-residue protein sequence, read N- to C-terminus: Large ribosomal subunit protein uL14 (122 aa).

It belongs to the universal ribosomal protein uL14 family. In terms of assembly, part of the 50S ribosomal subunit. Forms a cluster with proteins L3 and L19. In the 70S ribosome, L14 and L19 interact and together make contacts with the 16S rRNA in bridges B5 and B8.

Functionally, binds to 23S rRNA. Forms part of two intersubunit bridges in the 70S ribosome. In Natranaerobius thermophilus (strain ATCC BAA-1301 / DSM 18059 / JW/NM-WN-LF), this protein is Large ribosomal subunit protein uL14.